The sequence spans 311 residues: Phosphopantothenate--cysteine ligase (311 aa).

Position 2 is an N-acetylalanine (A2).

This sequence belongs to the PPC synthetase family. As to quaternary structure, homodimer.

The catalysed reaction is (R)-4'-phosphopantothenate + L-cysteine + ATP = N-[(R)-4-phosphopantothenoyl]-L-cysteine + AMP + diphosphate + H(+). It carries out the reaction (R)-4'-phosphopantothenate + L-cysteine + CTP = N-[(R)-4-phosphopantothenoyl]-L-cysteine + CMP + diphosphate + H(+). It functions in the pathway cofactor biosynthesis; coenzyme A biosynthesis; CoA from (R)-pantothenate: step 2/5. Its function is as follows. Catalyzes the second step in the biosynthesis of coenzyme A from vitamin B5, where cysteine is conjugated to 4'-phosphopantothenate to form 4-phosphopantothenoylcysteine. Has a preference for ATP over CTP as a cosubstrate. In Mus musculus (Mouse), this protein is Phosphopantothenate--cysteine ligase (Ppcs).